The sequence spans 138 residues: ATP synthase epsilon chain (138 aa).

It belongs to the ATPase epsilon chain family. In terms of assembly, F-type ATPases have 2 components, CF(1) - the catalytic core - and CF(0) - the membrane proton channel. CF(1) has five subunits: alpha(3), beta(3), gamma(1), delta(1), epsilon(1). CF(0) has three main subunits: a, b and c.

It is found in the cell membrane. Its function is as follows. Produces ATP from ADP in the presence of a proton gradient across the membrane. This chain is ATP synthase epsilon chain, found in Streptococcus pyogenes serotype M2 (strain MGAS10270).